The chain runs to 337 residues: Ketol-acid reductoisomerase (NADP(+)) (337 aa).

Residues 1–180 (MFYEKDADVD…GGGKSGIIET (180 aa)) form the KARI N-terminal Rossmann domain. NADP(+) is bound by residues 22–25 (YGSQ), Arg46, Ser49, Ser51, and 81–84 (DELQ). His106 is an active-site residue. Gly132 is an NADP(+) binding site. The region spanning 181-326 (TFKDECETDL…AELRAMMPWI (146 aa)) is the KARI C-terminal knotted domain. Mg(2+) is bound by residues Asp189, Glu193, Glu225, and Glu229. Ser250 lines the substrate pocket.

The protein belongs to the ketol-acid reductoisomerase family. Mg(2+) serves as cofactor.

It carries out the reaction (2R)-2,3-dihydroxy-3-methylbutanoate + NADP(+) = (2S)-2-acetolactate + NADPH + H(+). The enzyme catalyses (2R,3R)-2,3-dihydroxy-3-methylpentanoate + NADP(+) = (S)-2-ethyl-2-hydroxy-3-oxobutanoate + NADPH + H(+). Its pathway is amino-acid biosynthesis; L-isoleucine biosynthesis; L-isoleucine from 2-oxobutanoate: step 2/4. The protein operates within amino-acid biosynthesis; L-valine biosynthesis; L-valine from pyruvate: step 2/4. Involved in the biosynthesis of branched-chain amino acids (BCAA). Catalyzes an alkyl-migration followed by a ketol-acid reduction of (S)-2-acetolactate (S2AL) to yield (R)-2,3-dihydroxy-isovalerate. In the isomerase reaction, S2AL is rearranged via a Mg-dependent methyl migration to produce 3-hydroxy-3-methyl-2-ketobutyrate (HMKB). In the reductase reaction, this 2-ketoacid undergoes a metal-dependent reduction by NADPH to yield (R)-2,3-dihydroxy-isovalerate. This chain is Ketol-acid reductoisomerase (NADP(+)), found in Pelagibacter ubique (strain HTCC1062).